The chain runs to 96 residues: UPF0213 protein BCE_0033 (96 aa).

The 76-residue stretch at 4–79 folds into the GIY-YIG domain; it reads NKHCFYVVEC…KQLNRKQKEE (76 aa).

Belongs to the UPF0213 family.

The polypeptide is UPF0213 protein BCE_0033 (Bacillus cereus (strain ATCC 10987 / NRS 248)).